Reading from the N-terminus, the 450-residue chain is Phosphoglucosamine mutase (450 aa).

Serine 107 serves as the catalytic Phosphoserine intermediate. Mg(2+)-binding residues include serine 107, aspartate 246, aspartate 248, and aspartate 250. At serine 107 the chain carries Phosphoserine.

It belongs to the phosphohexose mutase family. Mg(2+) serves as cofactor. Activated by phosphorylation.

The enzyme catalyses alpha-D-glucosamine 1-phosphate = D-glucosamine 6-phosphate. Catalyzes the conversion of glucosamine-6-phosphate to glucosamine-1-phosphate. The sequence is that of Phosphoglucosamine mutase from Dechloromonas aromatica (strain RCB).